Consider the following 300-residue polypeptide: NADH-ubiquinone oxidoreductase chain 2 (300 aa).

Transmembrane regions (helical) follow at residues 4–24 (FFCI…NVLV), 29–49 (FLLM…YVGI), 58–78 (SLGL…IVMM), 87–107 (FWVF…FLTF), 122–142 (FSAF…LFVL), 165–185 (FLSV…MAFL), 201–221 (VLLV…IFVL), 231–251 (FLLF…LWLV), and 267–287 (VLFF…FSKI).

Belongs to the complex I subunit 2 family.

Its subcellular location is the mitochondrion inner membrane. The enzyme catalyses a ubiquinone + NADH + 5 H(+)(in) = a ubiquinol + NAD(+) + 4 H(+)(out). Core subunit of the mitochondrial membrane respiratory chain NADH dehydrogenase (Complex I) that is believed to belong to the minimal assembly required for catalysis. Complex I functions in the transfer of electrons from NADH to the respiratory chain. The immediate electron acceptor for the enzyme is believed to be ubiquinone. This is NADH-ubiquinone oxidoreductase chain 2 (ND2) from Ascaris suum (Pig roundworm).